The chain runs to 691 residues: Lectin-domain containing receptor kinase VI.4 (691 aa).

Residues 1 to 19 (MGRAKSMVSLLLVLFLVRA) form the signal peptide. The Extracellular portion of the chain corresponds to 20–306 (HVATTETTTE…AKKRGYNGKV (287 aa)). The tract at residues 26 to 273 (TTTEFIFHGF…AHYVMGWSFA (248 aa)) is legume-lectin like. The chain crosses the membrane as a helical span at residues 307-327 (IALIVALSTVISIMLVLLFLF). The Cytoplasmic segment spans residues 328–691 (MMYKKRMQQE…ISSTSLISGR (364 aa)). The 279-residue stretch at 363-641 (FKENRVVGTG…LNRDEDVPEI (279 aa)) folds into the Protein kinase domain. ATP is bound by residues 369 to 377 (VGTGGFGIV) and K392. D491 acts as the Proton acceptor in catalysis.

The protein in the C-terminal section; belongs to the protein kinase superfamily. Ser/Thr protein kinase family. This sequence in the N-terminal section; belongs to the leguminous lectin family.

The protein localises to the cell membrane. The enzyme catalyses L-seryl-[protein] + ATP = O-phospho-L-seryl-[protein] + ADP + H(+). The catalysed reaction is L-threonyl-[protein] + ATP = O-phospho-L-threonyl-[protein] + ADP + H(+). Functionally, involved in negative regulation of abscisic acid response in seed germination. The protein is Lectin-domain containing receptor kinase VI.4 (LECRK64) of Arabidopsis thaliana (Mouse-ear cress).